A 105-amino-acid chain; its full sequence is Large ribosomal subunit protein bL21 (105 aa).

It belongs to the bacterial ribosomal protein bL21 family. As to quaternary structure, part of the 50S ribosomal subunit. Contacts protein L20.

Its function is as follows. This protein binds to 23S rRNA in the presence of protein L20. The sequence is that of Large ribosomal subunit protein bL21 from Natranaerobius thermophilus (strain ATCC BAA-1301 / DSM 18059 / JW/NM-WN-LF).